A 175-amino-acid polypeptide reads, in one-letter code: Chorismate pyruvate-lyase (175 aa).

4 residues coordinate substrate: M36, R78, L116, and E157.

This sequence belongs to the UbiC family. Monomer.

It localises to the cytoplasm. The enzyme catalyses chorismate = 4-hydroxybenzoate + pyruvate. It participates in cofactor biosynthesis; ubiquinone biosynthesis. Its function is as follows. Removes the pyruvyl group from chorismate, with concomitant aromatization of the ring, to provide 4-hydroxybenzoate (4HB) for the ubiquinone pathway. This is Chorismate pyruvate-lyase from Hamiltonella defensa subsp. Acyrthosiphon pisum (strain 5AT).